A 122-amino-acid chain; its full sequence is Large ribosomal subunit protein uL14 (122 aa).

Belongs to the universal ribosomal protein uL14 family. Part of the 50S ribosomal subunit. Forms a cluster with proteins L3 and L19. In the 70S ribosome, L14 and L19 interact and together make contacts with the 16S rRNA in bridges B5 and B8.

Functionally, binds to 23S rRNA. Forms part of two intersubunit bridges in the 70S ribosome. The chain is Large ribosomal subunit protein uL14 from Synechococcus sp. (strain JA-2-3B'a(2-13)) (Cyanobacteria bacterium Yellowstone B-Prime).